The chain runs to 365 residues: MFEINPVKHKIEEVAERTQVLRGYLDYDAKKERLEEVNAELEQPDVWNEPEKAQALGKERSSLEAIVETIDQLEQGLEDVSGLLDLAVEADDEETFNEAVAELEGLNKKLEQLEFRRMFSGEYDSADCYLDLQAGSGGTEAQDWASMLMRMYLRWAESRGFKTEIIEESDGDVAGLKSATIKIIGEYAYGWLRTETGVHRLVRKSPFDSGGRRHTSFSSAFVYPEVDDNIDIEINPADLRIDVYRASGAGGQHVNKTESAVRITHVPTGLVTQCQNDRSQHKNKDQAMKQMKAKLYELEMQKKNADKQVMEDNKSDIGWGSQIRSYVLDDSRIKDLRTGVETRNTQAVLDGDLDKFIEASLKAGL.

At glutamine 252 the chain carries N5-methylglutamine.

This sequence belongs to the prokaryotic/mitochondrial release factor family. Methylated by PrmC. Methylation increases the termination efficiency of RF2.

It is found in the cytoplasm. Its function is as follows. Peptide chain release factor 2 directs the termination of translation in response to the peptide chain termination codons UGA and UAA. This chain is Peptide chain release factor 2, found in Proteus mirabilis (strain HI4320).